We begin with the raw amino-acid sequence, 95 residues long: Protein TusB (95 aa).

This sequence belongs to the DsrH/TusB family. Heterohexamer, formed by a dimer of trimers. The hexameric TusBCD complex contains 2 copies each of TusB, TusC and TusD. The TusBCD complex interacts with TusE.

The protein resides in the cytoplasm. In terms of biological role, part of a sulfur-relay system required for 2-thiolation of 5-methylaminomethyl-2-thiouridine (mnm(5)s(2)U) at tRNA wobble positions. The chain is Protein TusB from Erwinia tasmaniensis (strain DSM 17950 / CFBP 7177 / CIP 109463 / NCPPB 4357 / Et1/99).